Here is a 66-residue protein sequence, read N- to C-terminus: DNA gyrase inhibitor YacG (66 aa).

Residues Cys9, Cys12, Cys28, and Cys32 each coordinate Zn(2+). Positions 45 to 66 are disordered; the sequence is HKIAGSEGSEDELYSGDLEPRH.

It belongs to the DNA gyrase inhibitor YacG family. Interacts with GyrB. Zn(2+) serves as cofactor.

Inhibits all the catalytic activities of DNA gyrase by preventing its interaction with DNA. Acts by binding directly to the C-terminal domain of GyrB, which probably disrupts DNA binding by the gyrase. This is DNA gyrase inhibitor YacG from Pseudomonas putida (strain ATCC 700007 / DSM 6899 / JCM 31910 / BCRC 17059 / LMG 24140 / F1).